Here is a 273-residue protein sequence, read N- to C-terminus: Large ribosomal subunit protein uL2cz/uL2cy (273 aa).

2 disordered regions span residues 1 to 22 and 223 to 254; these read MAIH…DSQV and MNPV…PALG.

It belongs to the universal ribosomal protein uL2 family. As to quaternary structure, part of the 50S ribosomal subunit.

It is found in the plastid. It localises to the chloroplast. The sequence is that of Large ribosomal subunit protein uL2cz/uL2cy (rpl2-A) from Drimys granadensis.